The primary structure comprises 579 residues: Glypican-2 (579 aa).

Positions 1 to 23 (MSALRPLLLLLLPLCPGPGPGPG) are cleaved as a signal peptide. O-linked (Xyl...) (heparan sulfate) serine glycans are attached at residues serine 55, serine 92, and serine 155. Disordered regions lie at residues 444–468 (GGSP…VPTR) and 485–555 (ALGH…RSGG). 2 O-linked (Xyl...) (heparan sulfate) serine glycosylation sites follow: serine 500 and serine 502. The span at 520–529 (PARPPRPPYP) shows a compositional bias: pro residues. Glycine 554 carries GPI-anchor amidated glycine lipidation. Residues 555-579 (GASIGFHTQTILILSLSALALLGPR) constitute a propeptide, removed in mature form.

This sequence belongs to the glypican family. As to quaternary structure, interacts (via heparan sulfate) with PTN; this interaction promotes neurite outgrowth through binding of PTN with chondroitin sulfate of proteoglycans, thereby releasing PTPRS of chondroitin sulfate proteoglycans (CSPGs) and leading to binding with heparan sulfate of GPC2. Interacts (heparan sulfate chain) with MDK; this interaction is inhibited by heparin followed by chondroitin sulfate E; this interaction induces GPC2 clustering through heparan sulfate chain; this interaction induces neuronal cell adhesion and neurite outgrowth.

Its subcellular location is the cell membrane. It localises to the secreted. It is found in the extracellular space. In terms of biological role, cell surface proteoglycan that bears heparan sulfate. May fulfill a function related to the motile behaviors of developing neurons. This Homo sapiens (Human) protein is Glypican-2 (GPC2).